Reading from the N-terminus, the 208-residue chain is FMN-dependent NADH:quinone oxidoreductase (208 aa).

FMN is bound by residues serine 10, 16 to 18 (SRS), and 96 to 99 (MYNF).

The protein belongs to the azoreductase type 1 family. In terms of assembly, homodimer. FMN serves as cofactor.

The catalysed reaction is 2 a quinone + NADH + H(+) = 2 a 1,4-benzosemiquinone + NAD(+). It catalyses the reaction N,N-dimethyl-1,4-phenylenediamine + anthranilate + 2 NAD(+) = 2-(4-dimethylaminophenyl)diazenylbenzoate + 2 NADH + 2 H(+). In terms of biological role, quinone reductase that provides resistance to thiol-specific stress caused by electrophilic quinones. Also exhibits azoreductase activity. Catalyzes the reductive cleavage of the azo bond in aromatic azo compounds to the corresponding amines. In Xanthobacter autotrophicus (strain ATCC BAA-1158 / Py2), this protein is FMN-dependent NADH:quinone oxidoreductase.